The sequence spans 778 residues: 5-methyltetrahydropteroyltriglutamate--homocysteine methyltransferase (778 aa).

5-methyltetrahydropteroyltri-L-glutamate is bound by residues 17 to 20 and lysine 118; that span reads RELK. L-homocysteine contacts are provided by residues 436–438 and glutamate 489; that span reads IGS. L-methionine is bound by residues 436–438 and glutamate 489; that span reads IGS. 5-methyltetrahydropteroyltri-L-glutamate-binding positions include 520–521 and tryptophan 566; that span reads RC. Aspartate 604 provides a ligand contact to L-homocysteine. Aspartate 604 is a binding site for L-methionine. Residue glutamate 610 coordinates 5-methyltetrahydropteroyltri-L-glutamate. Histidine 646, cysteine 648, and glutamate 670 together coordinate Zn(2+). The Proton donor role is filled by histidine 699. Cysteine 731 is a binding site for Zn(2+).

This sequence belongs to the vitamin-B12 independent methionine synthase family. Zn(2+) serves as cofactor.

The enzyme catalyses 5-methyltetrahydropteroyltri-L-glutamate + L-homocysteine = tetrahydropteroyltri-L-glutamate + L-methionine. The protein operates within amino-acid biosynthesis; L-methionine biosynthesis via de novo pathway; L-methionine from L-homocysteine (MetE route): step 1/1. In terms of biological role, catalyzes the transfer of a methyl group from 5-methyltetrahydrofolate to homocysteine resulting in methionine formation. The chain is 5-methyltetrahydropteroyltriglutamate--homocysteine methyltransferase from Vibrio vulnificus (strain CMCP6).